Consider the following 266-residue polypeptide: Expansin-A13 (266 aa).

The N-terminal stretch at 1 to 19 is a signal peptide; it reads MQRFLLPLLFLALSPPAIC. An Expansin-like EG45 domain is found at 58 to 171; sequence GGACGYGDLV…RRINCRKEGS (114 aa). The region spanning 181-260 is the Expansin-like CBD domain; that stretch reads IFISVLITNV…NWNYGQTFEG (80 aa).

It belongs to the expansin family. Expansin A subfamily.

It localises to the secreted. Its subcellular location is the cell wall. The protein localises to the membrane. In terms of biological role, causes loosening and extension of plant cell walls by disrupting non-covalent bonding between cellulose microfibrils and matrix glucans. No enzymatic activity has been found. The chain is Expansin-A13 (EXPA13) from Arabidopsis thaliana (Mouse-ear cress).